We begin with the raw amino-acid sequence, 110 residues long: Ferredoxin (110 aa).

2 4Fe-4S ferredoxin-type domains span residues 2-30 and 31-60; these read TYIV…YEGE and FMLV…PESP. Positions 9 and 17 each coordinate [3Fe-4S] cluster. Cysteine 21, cysteine 40, cysteine 43, and cysteine 46 together coordinate [4Fe-4S] cluster. Cysteine 50 contributes to the [3Fe-4S] cluster binding site.

Requires [4Fe-4S] cluster as cofactor. [3Fe-4S] cluster is required as a cofactor.

Functionally, ferredoxins are iron-sulfur proteins that transfer electrons in a wide variety of metabolic reactions. This is Ferredoxin (fdxA) from Rickettsia typhi (strain ATCC VR-144 / Wilmington).